Consider the following 182-residue polypeptide: Ribulose bisphosphate carboxylase small subunit, chloroplastic (182 aa).

A chloroplast-targeting transit peptide spans methionine 1–glutamine 58.

The protein belongs to the RuBisCO small chain family. In terms of assembly, heterohexadecamer of 8 large and 8 small subunits.

It is found in the plastid. The protein resides in the chloroplast. In terms of biological role, ruBisCO catalyzes two reactions: the carboxylation of D-ribulose 1,5-bisphosphate, the primary event in carbon dioxide fixation, as well as the oxidative fragmentation of the pentose substrate. Both reactions occur simultaneously and in competition at the same active site. Although the small subunit is not catalytic it is essential for maximal activity. The protein is Ribulose bisphosphate carboxylase small subunit, chloroplastic of Betula pendula (European white birch).